A 396-amino-acid chain; its full sequence is Putative 2-hydroxyacid dehydrogenase YPL113C (396 aa).

NAD(+)-binding positions include 227 to 228 (SI), 311 to 313 (VGR), and Asp-337. Arg-313 is an active-site residue. Glu-342 is a catalytic residue. His-361 (proton donor) is an active-site residue. 361–364 (HIGS) contributes to the NAD(+) binding site.

Belongs to the D-isomer specific 2-hydroxyacid dehydrogenase family.

Functionally, putative 2-hydroxyacid dehydrogenase. The polypeptide is Putative 2-hydroxyacid dehydrogenase YPL113C (Saccharomyces cerevisiae (strain ATCC 204508 / S288c) (Baker's yeast)).